The sequence spans 73 residues: Protein WFDC10B (73 aa).

The N-terminal stretch at 1–21 is a signal peptide; that stretch reads MAPQTLLLVLVLCVLLLQAQG. The 46-residue stretch at 28–73 folds into the WAP domain; that stretch reads RMQRIKVCEKRPSIDLCIHHCSYFQKCETNKICCSAFCGNICMSIL.

As to expression, ubiquitously expressed.

The protein localises to the secreted. This Homo sapiens (Human) protein is Protein WFDC10B (WFDC10B).